The sequence spans 527 residues: RUS family member 1 (527 aa).

N-linked (GlcNAc...) asparagine glycosylation is present at Asn-21. The chain crosses the membrane as a helical span at residues 220–240 (SQETAVNLVGMLLSVIVSSFI). Residue Asn-243 is glycosylated (N-linked (GlcNAc...) asparagine). Residues 245 to 265 (SLIVTWLVFLFFTSLHLFCNY) form a helical membrane-spanning segment. A glycan (N-linked (GlcNAc...) asparagine) is linked at Asn-346. The interval 350–426 (TKNVNNNNNN…NNNNNNNNNK (77 aa)) is disordered. N-linked (GlcNAc...) asparagine glycosylation is found at Asn-467 and Asn-497.

This sequence belongs to the RUS1 family.

Its subcellular location is the membrane. The sequence is that of RUS family member 1 (rusf1) from Dictyostelium discoideum (Social amoeba).